The chain runs to 555 residues: Zinc finger and SCAN domain-containing protein 21 (555 aa).

Disordered stretches follow at residues methionine 1 to lysine 74, threonine 102 to threonine 133, leucine 204 to valine 243, and glutamate 263 to proline 354. 3 repeat units span residues glutamate 18 to leucine 56, glutamate 57 to leucine 95, and glutamate 96 to proline 134. A 3 X 39 AA approximate tandem repeats region spans residues glutamate 18–proline 134. Lysine 26 is covalently cross-linked (Glycyl lysine isopeptide (Lys-Gly) (interchain with G-Cter in SUMO2)). One can recognise an SCAN box domain in the interval arginine 122–leucine 204. Positions glutamine 210–threonine 240 are enriched in polar residues. Positions proline 280–lysine 302 are enriched in basic and acidic residues. Glycyl lysine isopeptide (Lys-Gly) (interchain with G-Cter in SUMO2) cross-links involve residues lysine 302 and lysine 313. Residues serine 316–threonine 332 are compositionally biased toward basic and acidic residues. C2H2-type zinc fingers lie at residues tyrosine 359–histidine 381, tyrosine 387–histidine 409, tyrosine 415–histidine 436, tyrosine 442–histidine 464, tyrosine 470–histidine 492, tyrosine 498–histidine 520, and tyrosine 526–histidine 548. Lysine 431 is covalently cross-linked (Glycyl lysine isopeptide (Lys-Gly) (interchain with G-Cter in SUMO2)).

This sequence belongs to the krueppel C2H2-type zinc-finger protein family. In terms of tissue distribution, expressed predominantly in the spermatocytes and spermatids of adult testes. It is also present at lower levels in the ovary, brain, spleen, embryo and fetus.

The protein localises to the nucleus. Strong transcriptional activator. Plays an important role in spermatogenesis; essential for the progression of meiotic prophase I in spermatocytes. The sequence is that of Zinc finger and SCAN domain-containing protein 21 (Zscan21) from Mus musculus (Mouse).